The primary structure comprises 200 residues: MNIINLPELNYEVFFVFIELGLIFGSLGVVFLTNIVYSAFLLGLVFVCISFLYLLLDADFVATAQILIYVGAVNILIVFAVMLINKPQSLQFLPSWTVGDTITLILCTSLFFLLISMILSISWSNIFSIAQSNKIGEQVLKSSVQGIGSSLLIDFLLPFELLSIVLLVALIGAITIARREKKVKLQKNRTLQVTKDSFIL.

Helical transmembrane passes span 13–33 (VFFV…VFLT), 35–55 (IVYS…LYLL), 64–84 (AQIL…VMLI), 101–121 (TITL…ILSI), and 156–176 (LLPF…AITI).

It belongs to the complex I subunit 6 family. NDH is composed of at least 16 different subunits, 5 of which are encoded in the nucleus.

It localises to the plastid. The protein localises to the chloroplast thylakoid membrane. It carries out the reaction a plastoquinone + NADH + (n+1) H(+)(in) = a plastoquinol + NAD(+) + n H(+)(out). The catalysed reaction is a plastoquinone + NADPH + (n+1) H(+)(in) = a plastoquinol + NADP(+) + n H(+)(out). NDH shuttles electrons from NAD(P)H:plastoquinone, via FMN and iron-sulfur (Fe-S) centers, to quinones in the photosynthetic chain and possibly in a chloroplast respiratory chain. The immediate electron acceptor for the enzyme in this species is believed to be plastoquinone. Couples the redox reaction to proton translocation, and thus conserves the redox energy in a proton gradient. This chain is NAD(P)H-quinone oxidoreductase subunit 6, chloroplastic (ndhG), found in Anthoceros angustus (Hornwort).